Reading from the N-terminus, the 222-residue chain is 2-C-methyl-D-erythritol 4-phosphate cytidylyltransferase (222 aa).

The protein belongs to the IspD/TarI cytidylyltransferase family. IspD subfamily.

It catalyses the reaction 2-C-methyl-D-erythritol 4-phosphate + CTP + H(+) = 4-CDP-2-C-methyl-D-erythritol + diphosphate. It functions in the pathway isoprenoid biosynthesis; isopentenyl diphosphate biosynthesis via DXP pathway; isopentenyl diphosphate from 1-deoxy-D-xylulose 5-phosphate: step 2/6. Catalyzes the formation of 4-diphosphocytidyl-2-C-methyl-D-erythritol from CTP and 2-C-methyl-D-erythritol 4-phosphate (MEP). The polypeptide is 2-C-methyl-D-erythritol 4-phosphate cytidylyltransferase (Thermotoga sp. (strain RQ2)).